We begin with the raw amino-acid sequence, 82 residues long: Turripeptide OL139 (82 aa).

The tract at residues 58–82 (HRTTRDTADKTHGGSQRDRFFQSIA) is disordered.

In terms of processing, contains 6 disulfide bonds. In terms of tissue distribution, expressed by the venom duct.

The protein localises to the secreted. Functionally, acts as a neurotoxin by inhibiting an ion channel. The sequence is that of Turripeptide OL139 from Iotyrris olangoensis (Sea snail).